The chain runs to 263 residues: Oxygen-evolving enhancer protein 2, chloroplastic (263 aa).

A chloroplast-targeting transit peptide spans 1–78 (MAAASCFHAL…VGTKVSPADA (78 aa)). Positions 14–30 (ARSSSSSLQSSSSRLPA) are enriched in low complexity. The segment at 14-34 (ARSSSSSLQSSSSRLPAPIKP) is disordered.

It belongs to the PsbP family.

The protein resides in the plastid. It localises to the chloroplast thylakoid membrane. Its function is as follows. May be involved in the regulation of photosystem II. The sequence is that of Oxygen-evolving enhancer protein 2, chloroplastic from Helianthus annuus (Common sunflower).